We begin with the raw amino-acid sequence, 101 residues long: Large ribosomal subunit protein bL21 (101 aa).

It belongs to the bacterial ribosomal protein bL21 family. In terms of assembly, part of the 50S ribosomal subunit. Contacts protein L20.

Functionally, this protein binds to 23S rRNA in the presence of protein L20. In Thermus thermophilus (strain ATCC BAA-163 / DSM 7039 / HB27), this protein is Large ribosomal subunit protein bL21.